A 1058-amino-acid chain; its full sequence is Protein translocase subunit SECA2, chloroplastic (1058 aa).

Residues 1–58 (MGSVSNLVSPNICHPAPPCLTSRSNKFPWTKPISGLLFYRSVTPIKRCHLVRRSCVVS) constitute a chloroplast transit peptide. 167-174 (MKTGEGKT) contributes to the ATP binding site.

The protein belongs to the SecA family. As to quaternary structure, part of a second Sec protein translocation apparatus. Interacts probably with SCY2.

The protein localises to the plastid. It is found in the chloroplast membrane. It carries out the reaction ATP + H2O + chloroplast-proteinSide 1 = ADP + phosphate + chloroplast-proteinSide 2.. Functionally, involved in protein export. Probably interacts with other proteins to allow the postimport or conservative sorting pathway for inner membrane proteins in plastids. May have a central role in coupling the hydrolysis of ATP to the transfer of proteins across the membrane. The sequence is that of Protein translocase subunit SECA2, chloroplastic from Arabidopsis thaliana (Mouse-ear cress).